The following is a 414-amino-acid chain: Esterase FrsA (414 aa).

The protein belongs to the FrsA family.

It carries out the reaction a carboxylic ester + H2O = an alcohol + a carboxylate + H(+). In terms of biological role, catalyzes the hydrolysis of esters. In Escherichia coli O7:K1 (strain IAI39 / ExPEC), this protein is Esterase FrsA.